Consider the following 1292-residue polypeptide: Putative late blight resistance protein homolog R1C-3 (1292 aa).

Coiled coils occupy residues 394 to 414 (DSLA…ESMQ) and 505 to 526 (RMNE…KLLN). One can recognise an NB-ARC domain in the interval 505–792 (RMNEEIVGFE…SESFVKSCEG (288 aa)). 538-545 (GMPGLGKT) is a binding site for ATP. LRR repeat units follow at residues 842 to 865 (AEEN…VYSH), 920 to 944 (FKFL…LFYL), 963 to 991 (LWNL…VWDM), 1066 to 1089 (PIRL…CISA), 1094 to 1113 (YLEL…TADH), 1114 to 1142 (LKHL…MFPQ), and 1163 to 1187 (FPNL…FMDI). The region spanning 1211–1278 (ETQVEDNQNT…KLRNVAYADE (68 aa)) is the HMA domain.

It belongs to the disease resistance NB-LRR family.

It localises to the cytoplasm. Its subcellular location is the membrane. Its function is as follows. Confers resistance to late blight (Phytophthora infestans) races carrying the avirulence gene Avr1. Resistance proteins guard the plant against pathogens that contain an appropriate avirulence protein via an indirect interaction with this avirulence protein. That triggers a defense system including the hypersensitive response, which restricts the pathogen growth. This chain is Putative late blight resistance protein homolog R1C-3 (R1C-3), found in Solanum demissum (Wild potato).